Reading from the N-terminus, the 132-residue chain is MRSLVWAVIATLIVLTPFSEATSSIASNNEEFKQNVRVASSSLEQKGTIEDSVITRKLQSDSVKKGDSTGLEERGGLHVPTIHDNKIVQGFYKVMRYLRQKLGIDFLLTRLRYGKNGSHQPNMGYSRVDHYH.

A signal peptide spans 1-21 (MRSLVWAVIATLIVLTPFSEA). The RxLR-dEER signature appears at 56 to 74 (RKLQSDSVKKGDSTGLEER). Residue asparagine 116 is glycosylated (N-linked (GlcNAc...) asparagine).

Belongs to the RxLR effector family.

It is found in the secreted. It localises to the host Golgi apparatus. Secreted effector that does not suppress pattern-triggered immunity (PTI) in plant host. In Plasmopara halstedii (Downy mildew of sunflower), this protein is Secreted RxLR effector protein RXLR-C22.